Reading from the N-terminus, the 299-residue chain is Release factor glutamine methyltransferase (299 aa).

Residues 134–138 (GTGSG), aspartate 157, tryptophan 186, and asparagine 203 each bind S-adenosyl-L-methionine. 203-206 (NPPY) is a binding site for substrate.

It belongs to the protein N5-glutamine methyltransferase family. PrmC subfamily.

The catalysed reaction is L-glutaminyl-[peptide chain release factor] + S-adenosyl-L-methionine = N(5)-methyl-L-glutaminyl-[peptide chain release factor] + S-adenosyl-L-homocysteine + H(+). In terms of biological role, methylates the class 1 translation termination release factors RF1/PrfA and RF2/PrfB on the glutamine residue of the universally conserved GGQ motif. In Synechocystis sp. (strain ATCC 27184 / PCC 6803 / Kazusa), this protein is Release factor glutamine methyltransferase.